The following is a 353-amino-acid chain: MEKTLETVPLERKKREKEQFRKLFIGGLSFETTEESLRNYYEQWGKLTDCVVMRDPASKRSRGFGFVTFSSMAEVDAAMAARPHSIDGRVVEPKRAVAREESGKPGAHVTVKKLFVGGIKEDTEEHHLRDYFEEYGKIDTIEIITDRQSGKKRGFGFVTFDDHDPVDKIFLQKYHTINGHNAEVRKALSRQEMQEVQSSRSGRGGNFGFGDSRGGGGNFGPGPGSNFRGGSDGYGSGRGFGDGYNGYGGGPGGGNFGGSPGYGGGRGGYGGGGPGYGNQGGGYGGGYDNYGGGNYGSGNYNDFGNYNQQPSNYGPMKSGNFGGSRNMGGPYGGGNYGPGGSGGSGGYGGRSRY.

Residue M1 is modified to N-acetylmethionine. T4 is modified (phosphothreonine). Positions 9-15 (PLERKKR) match the Nuclear localization signal motif. RRM domains lie at 21-104 (RKLF…ESGK) and 112-191 (KKLF…LSRQ). K22 is covalently cross-linked (Glycyl lysine isopeptide (Lys-Gly) (interchain with G-Cter in SUMO2)). S29 is modified (phosphoserine). R38 bears the Omega-N-methylarginine mark. S85 carries the phosphoserine modification. K104 is modified (N6,N6-dimethyllysine; alternate). A Glycyl lysine isopeptide (Lys-Gly) (interchain with G-Cter in SUMO2); alternate cross-link involves residue K104. Glycyl lysine isopeptide (Lys-Gly) (interchain with G-Cter in SUMO2) cross-links involve residues K112, K120, and K137. Residue T140 is modified to Phosphothreonine. S149 is modified (phosphoserine). K152 participates in a covalent cross-link: Glycyl lysine isopeptide (Lys-Gly) (interchain with G-Cter in SUMO2). Phosphothreonine is present on T159. Glycyl lysine isopeptide (Lys-Gly) (interchain with G-Cter in SUMO2); alternate cross-links involve residues K168 and K173. K168 and K173 each carry N6-acetyllysine; alternate. A Phosphothreonine modification is found at T176. K186 participates in a covalent cross-link: Glycyl lysine isopeptide (Lys-Gly) (interchain with G-Cter in SUMO2). A phosphoserine mark is found at S189 and S201. Residues 193 to 353 (MQEVQSSRSG…SGGYGGRSRY (161 aa)) form a disordered region. Gly residues predominate over residues 202–223 (GRGGNFGFGDSRGGGGNFGPGP). R203 is subject to Asymmetric dimethylarginine; alternate. Dimethylated arginine; alternate is present on R203. At R203 the chain carries Omega-N-methylarginine; alternate. S212 bears the Phosphoserine mark. An Asymmetric dimethylarginine; alternate modification is found at R213. Dimethylated arginine; alternate is present on R213. Residue R213 is modified to Omega-N-methylarginine; alternate. Position 225 is a phosphoserine (S225). Position 228 is an omega-N-methylarginine (R228). Phosphoserine is present on residues S231 and S236. At R238 the chain carries Omega-N-methylarginine. S259 is modified (phosphoserine). Residue R266 is modified to Asymmetric dimethylarginine; alternate. R266 is subject to Omega-N-methylarginine; alternate. The nuclear targeting sequence stretch occupies residues 308 to 347 (QQPSNYGPMKSGNFGGSRNMGGPYGGGNYGPGGSGGSGGY). Over residues 320–353 (NFGGSRNMGGPYGGGNYGPGGSGGSGGYGGRSRY) the composition is skewed to gly residues. A Phosphoserine modification is found at S324. R325 bears the Omega-N-methylarginine mark. Phosphotyrosine is present on Y331. Phosphoserine is present on residues S341 and S344. Phosphotyrosine is present on Y347. R350 carries the omega-N-methylarginine modification.

As to quaternary structure, homodimer; dimerization is required for nucleocytoplasmic translocation. Identified in the spliceosome C complex. Identified in a IGF2BP1-dependent mRNP granule complex containing untranslated mRNAs. Interacts with IGF2BP1. Interacts with C9orf72. Interacts with DGCR8. Interacts with TARDBP. Interacts with CKAP5. Interacts with TBK1. Interacts with STING1. Interacts with SRC. Interacts with PPIA/CYPA. Interacts (via C-terminus) with FAM76B; the interaction results in retention of HNRNPA2B1 in the nucleus and inhibition of the NF-kappa-B-mediated inflammatory pathway. Interacts with NF-kappa-B inhibitors NFKBIA and NFKBIE; the interaction may be mediated by the RRM2 domain of HNRNPA2B1, and HNRNPA2B1 may interact simultaneously with FAM76B and either NFKBIA or NFKBIE to form a complex. Asymmetric dimethylation at Arg-266 constitutes the major methylation site. According to a report, methylation affects subcellular location and promotes nuclear localization. According to another report, methylation at Arg-266 does not influence nucleocytoplasmic shuttling. Post-translationally, sumoylated in exosomes, promoting miRNAs-binding. In terms of tissue distribution, in the brain, isoform A2 and isoform B1 are abundant in large ganglion-type neurons, such as Purkinje cells, and are less abundant in neighboring glia cells. Isoform A2 is more abundant than isoform B1 in brain. In testis, isoform A2 and isoform B1 are present in spermatogonia and spermatocytes, but not in spermatids or sperm. Isoform A2 is more abundant in the adrenal medulla than in the cortical cells. Isoform B1 is found in both adrenal medulla and cortical cells. Isoform A2 is more abundant than isoform B1 in the adrenal gland. Isoform A2 and isoform B1 are both detected in pancreas and kidney, and at lower levels in heart and lung. Isoform B1 is more abundant than isoform A2 in heart, lung and intestine (at protein level). Isoform A2b and isoform B1b are testis-specific.

It is found in the nucleus. It localises to the cytoplasm. The protein localises to the nucleoplasm. Its subcellular location is the cytoplasmic granule. The protein resides in the secreted. It is found in the extracellular exosome. In terms of biological role, heterogeneous nuclear ribonucleoprotein (hnRNP) that associates with nascent pre-mRNAs, packaging them into hnRNP particles. The hnRNP particle arrangement on nascent hnRNA is non-random and sequence-dependent and serves to condense and stabilize the transcripts and minimize tangling and knotting. Packaging plays a role in various processes such as transcription, pre-mRNA processing, RNA nuclear export, subcellular location, mRNA translation and stability of mature mRNAs. Forms hnRNP particles with at least 20 other different hnRNP and heterogeneous nuclear RNA in the nucleus. Involved in transport of specific mRNAs to the cytoplasm in oligodendrocytes and neurons: acts by specifically recognizing and binding the A2RE (21 nucleotide hnRNP A2 response element) or the A2RE11 (derivative 11 nucleotide oligonucleotide) sequence motifs present on some mRNAs, and promotes their transport to the cytoplasm. Specifically binds single-stranded telomeric DNA sequences, protecting telomeric DNA repeat against endonuclease digestion. Also binds other RNA molecules, such as primary miRNA (pri-miRNAs): acts as a nuclear 'reader' of the N6-methyladenosine (m6A) mark by specifically recognizing and binding a subset of nuclear m6A-containing pri-miRNAs. Binding to m6A-containing pri-miRNAs promotes pri-miRNA processing by enhancing binding of DGCR8 to pri-miRNA transcripts. Involved in miRNA sorting into exosomes following sumoylation, possibly by binding (m6A)-containing pre-miRNAs. Acts as a regulator of efficiency of mRNA splicing, possibly by binding to m6A-containing pre-mRNAs. Plays a role in the splicing of pyruvate kinase PKM by binding repressively to sequences flanking PKM exon 9, inhibiting exon 9 inclusion and resulting in exon 10 inclusion and production of the PKM M2 isoform. Also plays a role in the activation of the innate immune response. Mechanistically, senses the presence of viral DNA in the nucleus, homodimerizes and is demethylated by JMJD6. In turn, translocates to the cytoplasm where it activates the TBK1-IRF3 pathway, leading to interferon alpha/beta production. This Rattus norvegicus (Rat) protein is Heterogeneous nuclear ribonucleoproteins A2/B1.